A 125-amino-acid polypeptide reads, in one-letter code: Phosphoribosyl-AMP cyclohydrolase (125 aa).

Asp74 contributes to the Mg(2+) binding site. Cys75 contacts Zn(2+). Asp76 and Asp78 together coordinate Mg(2+). Zn(2+) contacts are provided by Cys92 and Cys99.

It belongs to the PRA-CH family. As to quaternary structure, homodimer. Mg(2+) serves as cofactor. Zn(2+) is required as a cofactor.

It localises to the cytoplasm. The catalysed reaction is 1-(5-phospho-beta-D-ribosyl)-5'-AMP + H2O = 1-(5-phospho-beta-D-ribosyl)-5-[(5-phospho-beta-D-ribosylamino)methylideneamino]imidazole-4-carboxamide. The protein operates within amino-acid biosynthesis; L-histidine biosynthesis; L-histidine from 5-phospho-alpha-D-ribose 1-diphosphate: step 3/9. In terms of biological role, catalyzes the hydrolysis of the adenine ring of phosphoribosyl-AMP. In Desulforapulum autotrophicum (strain ATCC 43914 / DSM 3382 / VKM B-1955 / HRM2) (Desulfobacterium autotrophicum), this protein is Phosphoribosyl-AMP cyclohydrolase.